Here is a 207-residue protein sequence, read N- to C-terminus: Protein lin-7 homolog B (207 aa).

Residues 1–13 (MAALVEPLGLERD) carry the Kinase interacting site motif. In terms of domain architecture, L27 spans 10–65 (LERDVSRAVELLERLQRSGELPPQKLQALQRVLQSRFCSAIREVYEQLYDTLDITG). The PDZ domain occupies 93 to 175 (VVELPKTDEG…SVKLVVRYTP (83 aa)). The interval 187 to 207 (KMRSARRRQQHHSYSSLESRG) is disordered. Over residues 198–207 (HSYSSLESRG) the composition is skewed to polar residues.

The protein belongs to the lin-7 family. Forms two exclusive ternary complexes with CASK and CASKIN1. The brain-specific heterotrimeric complex (LIN-10-LIN-2-LIN-7 complex) composed of at least APBA1, CASK, and LIN7, associates with the motor protein KIF17 to transport vesicles along microtubules. Forms a heterotrimeric complex composed of MMP5, LIN7B and PATJ; the N-terminal L27 domain of PALS1 interacts with the L27 domain of PATJ and the C-terminal L27 domain of PALS1 interacts with the L27 domain of LIN7B. Forms a heterotrimeric complex with DLG1 and CASK via their L27 domains. Interacts with DLG4 and GRIN2B as well as CDH1 and CTNNB1, the channels KCNJ12/Kir2.2, KCNJ4/Kir2.3 and probably KCNJ2/Kir2.1 and SLC6A12/BGT-1 via its PDZ domain. The association of LIN7A with cadherin and beta-catenin is calcium-dependent, occurs at synaptic junctions and requires the actin cytoskeleton. Interacts with EGFR, ERBB2, ERBB3 and ERBB4 with both PDZ and KID domains. Associates with KIF17 via APBA1. Interacts with ASIC3. Interacts with TOPK. Interacts with RTKN. Interacts with APBA1. Interacts with MPP7. Interacts with DLG2. Interacts with DLG3. As to expression, expressed only in brain.

It localises to the cell membrane. The protein localises to the basolateral cell membrane. It is found in the cell junction. Its subcellular location is the postsynaptic density membrane. The protein resides in the tight junction. In terms of biological role, plays a role in establishing and maintaining the asymmetric distribution of channels and receptors at the plasma membrane of polarized cells. Forms membrane-associated multiprotein complexes that may regulate delivery and recycling of proteins to the correct membrane domains. The tripartite complex composed of LIN7 (LIN7A, LIN7B or LIN7C), CASK and APBA1 associates with the motor protein KIF17 to transport vesicles containing N-methyl-D-aspartate (NMDA) receptor subunit NR2B along microtubules. This complex may have the potential to couple synaptic vesicle exocytosis to cell adhesion in brain. Ensures the proper localization of GRIN2B (subunit 2B of the NMDA receptor) to neuronal postsynaptic density and may function in localizing synaptic vesicles at synapses where it is recruited by beta-catenin and cadherin. Required to localize Kir2 channels, GABA transporter (SLC6A12) and EGFR/ERBB1, ERBB2, ERBB3 and ERBB4 to the basolateral membrane of epithelial cells. May increase the amplitude of ASIC3 acid-evoked currents by stabilizing the channel at the cell surface. This is Protein lin-7 homolog B (Lin7b) from Rattus norvegicus (Rat).